Consider the following 40-residue polypeptide: MANTTGRIPLWLIGTVTGILVIGLLGIFFYGAYSGLGSSL.

The chain crosses the membrane as a helical span at residues 8-28; the sequence is IPLWLIGTVTGILVIGLLGIF.

It belongs to the PsbJ family. In terms of assembly, PSII is composed of 1 copy each of membrane proteins PsbA, PsbB, PsbC, PsbD, PsbE, PsbF, PsbH, PsbI, PsbJ, PsbK, PsbL, PsbM, PsbT, PsbX, PsbY, PsbZ, Psb30/Ycf12, at least 3 peripheral proteins of the oxygen-evolving complex and a large number of cofactors. It forms dimeric complexes.

Its subcellular location is the plastid. The protein localises to the chloroplast thylakoid membrane. Its function is as follows. One of the components of the core complex of photosystem II (PSII). PSII is a light-driven water:plastoquinone oxidoreductase that uses light energy to abstract electrons from H(2)O, generating O(2) and a proton gradient subsequently used for ATP formation. It consists of a core antenna complex that captures photons, and an electron transfer chain that converts photonic excitation into a charge separation. This is Photosystem II reaction center protein J from Angiopteris evecta (Mule's foot fern).